A 126-amino-acid chain; its full sequence is Flagellar assembly factor FliW (126 aa).

The protein belongs to the FliW family. Interacts with translational regulator CsrA and flagellin(s).

It localises to the cytoplasm. Acts as an anti-CsrA protein, binds CsrA and prevents it from repressing translation of its target genes, one of which is flagellin. Binds to flagellin and participates in the assembly of the flagellum. The sequence is that of Flagellar assembly factor FliW from Sulfurimonas denitrificans (strain ATCC 33889 / DSM 1251) (Thiomicrospira denitrificans (strain ATCC 33889 / DSM 1251)).